The primary structure comprises 248 residues: Aspartate/glutamate leucyltransferase (248 aa).

Belongs to the R-transferase family. Bpt subfamily.

It is found in the cytoplasm. It carries out the reaction N-terminal L-glutamyl-[protein] + L-leucyl-tRNA(Leu) = N-terminal L-leucyl-L-glutamyl-[protein] + tRNA(Leu) + H(+). The enzyme catalyses N-terminal L-aspartyl-[protein] + L-leucyl-tRNA(Leu) = N-terminal L-leucyl-L-aspartyl-[protein] + tRNA(Leu) + H(+). Its function is as follows. Functions in the N-end rule pathway of protein degradation where it conjugates Leu from its aminoacyl-tRNA to the N-termini of proteins containing an N-terminal aspartate or glutamate. This is Aspartate/glutamate leucyltransferase from Methylorubrum populi (strain ATCC BAA-705 / NCIMB 13946 / BJ001) (Methylobacterium populi).